The sequence spans 590 residues: Putative laccase-19 (590 aa).

The N-terminal stretch at 1–28 (MEKLSMVTSLLCAITVAVLAVAVVSGEA) is a signal peptide. Plastocyanin-like domains are found at residues 36 to 152 (VVHE…PRDG) and 161 to 315 (KDVP…YAGA). N-linked (GlcNAc...) asparagine glycosylation is found at N41 and N47. Positions 86 and 88 each coordinate Cu cation. A glycan (N-linked (GlcNAc...) asparagine) is linked at N120. H131 and H133 together coordinate Cu cation. Residues N205, N344, N378, N397, N434, and N465 are each glycosylated (N-linked (GlcNAc...) asparagine). A Plastocyanin-like 3 domain is found at 424 to 566 (DFPIRPPRPF…ATAFIVEDGP (143 aa)). Cu cation is bound by residues N483, H486, H488, H545, C546, H547, H551, and M556. Residues 565–590 (GPTPETSLPPPPPEFKRCGNNGLSQP) form a disordered region.

It belongs to the multicopper oxidase family. The cofactor is Cu cation.

Its subcellular location is the secreted. It is found in the extracellular space. It localises to the apoplast. The enzyme catalyses 4 hydroquinone + O2 = 4 benzosemiquinone + 2 H2O. In terms of biological role, lignin degradation and detoxification of lignin-derived products. The polypeptide is Putative laccase-19 (LAC19) (Oryza sativa subsp. indica (Rice)).